A 222-amino-acid polypeptide reads, in one-letter code: DnaJ homolog subfamily B member 9 (222 aa).

The first 23 residues, 1–23, serve as a signal peptide directing secretion; the sequence is MATPQSVFVFAICILMITELILA. A J domain is found at 26–90; sequence SYYDILGVPK…NSRKEYDTIG (65 aa). Residues 91 to 222 form a divergent targeting domain region; the sequence is HSAFTNGKGQ…VTTYTDCSGQ (132 aa). S133 carries the post-translational modification Phosphoserine.

Interacts with HSPA5/BiP; interaction is direct. Interacts with ERN1/IRE1 (via the luminal region). Interacts with DERL1. Post-translationally, not N-glycosylated.

The protein resides in the endoplasmic reticulum lumen. Its function is as follows. Co-chaperone for Hsp70 protein HSPA5/BiP that acts as a key repressor of the ERN1/IRE1-mediated unfolded protein response (UPR). J domain-containing co-chaperones stimulate the ATPase activity of Hsp70 proteins and are required for efficient substrate recognition by Hsp70 proteins. In the unstressed endoplasmic reticulum, interacts with the luminal region of ERN1/IRE1 and selectively recruits HSPA5/BiP: HSPA5/BiP disrupts the dimerization of the active ERN1/IRE1 luminal region, thereby inactivating ERN1/IRE1. Also involved in endoplasmic reticulum-associated degradation (ERAD) of misfolded proteins. Required for survival of B-cell progenitors and normal antibody production. The chain is DnaJ homolog subfamily B member 9 from Mus musculus (Mouse).